The primary structure comprises 744 residues: 1,4-alpha-glucan branching enzyme GlgB (744 aa).

Asp-415 serves as the catalytic Nucleophile. The active-site Proton donor is the Glu-468.

Belongs to the glycosyl hydrolase 13 family. GlgB subfamily. Monomer.

It carries out the reaction Transfers a segment of a (1-&gt;4)-alpha-D-glucan chain to a primary hydroxy group in a similar glucan chain.. It participates in glycan biosynthesis; glycogen biosynthesis. Functionally, catalyzes the formation of the alpha-1,6-glucosidic linkages in glycogen by scission of a 1,4-alpha-linked oligosaccharide from growing alpha-1,4-glucan chains and the subsequent attachment of the oligosaccharide to the alpha-1,6 position. The protein is 1,4-alpha-glucan branching enzyme GlgB of Shewanella frigidimarina (strain NCIMB 400).